The primary structure comprises 447 residues: MGCVASTGNYENEDDPFIQNKRANDLIEQNLQQERNKNKNEVKLLLLGAGESGKSTVLKQMKLLHQGGFTHRERMQYGQVIWADAIESMRTLILQAGKLGIELDSDLKNAHSGQLVNTELHQCKEKIFRANTLDQIDARMAGGSEFLNEYVLKYNGIGSKKKRQTTLGFKESNGADPEEEDETDAFLSEKLAGTSYTGSSETSELKRIDQSTNEEIAYAIKKLWTQDKGIRQCFNRSSEFQLEGSASYYFDNIEKFARVDYVCDDMDILKGRIKTTGITENSFKIGPSTFKVYDAGGQRSERRKWIHCFEGITAVVFVIAISEYDQMLFEDERVNRMHESIVLLDTLLNSRWFANTPFILFLNKVDIFQEKVKRSPIRTWFPNYPGKLGDSETGLKYFESLFLSLNRSNKPIYVHRTCATDTQSMRFVLGAVTDLVIQQNLKKSGIL.

Gly-2 carries N-myristoyl glycine lipidation. Cys-3 carries the S-palmitoyl cysteine lipid modification. In terms of domain architecture, G-alpha spans 40–447 (NEVKLLLLGA…QQNLKKSGIL (408 aa)). Residues 43-56 (KLLLLGAGESGKST) form a G1 motif region. 13 residues coordinate GTP: Glu-51, Ser-52, Gly-53, Lys-54, Ser-55, Thr-56, Leu-269, Thr-275, Gly-297, Asn-363, Lys-364, Asp-366, and Ala-419. Residue Ser-55 coordinates Mg(2+). The G2 motif stretch occupies residues 267 to 275 (DILKGRIKT). A Mg(2+)-binding site is contributed by Thr-275. The interval 290–299 (FKVYDAGGQR) is G3 motif. The tract at residues 359–366 (ILFLNKVD) is G4 motif. The tract at residues 417–422 (TCATDT) is G5 motif.

It belongs to the G-alpha family. In terms of assembly, g proteins are composed of 3 units; alpha, beta and gamma. The alpha chain contains the guanine nucleotide binding site. Requires Mg(2+) as cofactor.

Guanine nucleotide-binding proteins (G proteins) are involved as modulators or transducers in various transmembrane signaling systems. This protein is involved in the mating response pathway. The protein is Guanine nucleotide-binding protein alpha-1 subunit (GPA1) of Kluyveromyces lactis (strain ATCC 8585 / CBS 2359 / DSM 70799 / NBRC 1267 / NRRL Y-1140 / WM37) (Yeast).